We begin with the raw amino-acid sequence, 776 residues long: Microtubule-associated protein tau (776 aa).

A compositionally biased stretch (basic and acidic residues) spans 1 to 26; it reads MAEPRQEFEVMEDHAGTYGLGDRKDQ. The segment at 1–591 is disordered; it reads MAEPRQEFEV…PVPMPDLKNV (591 aa). N-acetylalanine is present on Ala2. Residues Tyr18 and Tyr29 each carry the phosphotyrosine modification. Lys44 is covalently cross-linked (Glycyl lysine isopeptide (Lys-Gly) (interchain with G-Cter in ubiquitin)). Phosphoserine occurs at positions 46 and 61. The span at 61–71 shows a compositional bias: polar residues; sequence SETSDAKSTPT. 3 positions are modified to phosphothreonine: Thr69, Thr71, and Thr111. 2 stretches are compositionally biased toward basic and acidic residues: residues 179 to 189 and 207 to 216; these read EGGRHAPELLK and GGKERPGSKE. Ser214 is modified (phosphoserine). The span at 217 to 228 shows a compositional bias: acidic residues; it reads EVDEDRDVDESS. Composition is skewed to basic and acidic residues over residues 293–303 and 314–323; these read KGQDAHLEFTF and EQAHSEEHLG. A compositionally biased stretch (low complexity) spans 324–340; it reads RAAFPGAPGEGPEARGP. Basic and acidic residues-rich tracts occupy residues 344–356 and 381–393; these read EDTK…EPSE and KSKD…DKKA. A compositionally biased stretch (polar residues) spans 440–452; it reads KYVSSVTPRTGSS. Residues 455–466 are compositionally biased toward basic and acidic residues; sequence KEMKLKGADGKT. Thr470 is subject to Phosphothreonine. Arg472 carries the omega-N-methylarginine modification. The residue at position 480 (Lys480) is an N6,N6-dimethyllysine; alternate. Lys480 bears the N6-acetyllysine; alternate mark. A phosphothreonine mark is found at Thr486, Thr492, and Thr498. Residues Ser502, Ser526, and Ser530 each carry the phosphoserine modification. Over residues 517 to 528 the composition is skewed to basic and acidic residues; that stretch reads RSERGEPPKSGD. A compositionally biased stretch (low complexity) spans 529–549; it reads RSGYSSPGSPGTPGSRSRTPS. Tyr532 carries the post-translational modification Phosphotyrosine. Phosphoserine is present on residues Ser533, Ser534, and Ser537. Residues Thr540 and Thr547 each carry the phosphothreonine modification. The residue at position 549 (Ser549) is a Phosphoserine. Thr552 bears the Phosphothreonine mark. An N6-acetyllysine modification is found at Lys560. A Phosphothreonine modification is found at Thr566. Phosphoserine is present on residues Ser570 and Ser572. 4 Tau/MAP repeats span residues 579 to 609, 610 to 640, 641 to 671, and 672 to 703; these read QTAP…GGGK, VQII…GGGS, VQIV…GGGQ, and VEVK…GGGN. Lys589 participates in a covalent cross-link: Glycyl lysine isopeptide (Lys-Gly) (interchain with G-Cter in ubiquitin). N6-acetyllysine; alternate is present on Lys594. Lys594 is subject to N6-methyllysine; alternate. Lys594 is covalently cross-linked (Glycyl lysine isopeptide (Lys-Gly) (interchain with G-Cter in ubiquitin); alternate). Ser597 is modified (phosphoserine). A Glycyl lysine isopeptide (Lys-Gly) (interchain with G-Cter in ubiquitin) cross-link involves residue Lys602. The residue at position 616 (Lys616) is an N6-acetyllysine; alternate. Residue Lys616 forms a Glycyl lysine isopeptide (Lys-Gly) (interchain with G-Cter in ubiquitin); alternate linkage. A phosphoserine mark is found at Ser620 and Ser624. The residue at position 625 (Lys625) is an N6-acetyllysine. Residue Ser628 is modified to Phosphoserine. The residue at position 633 (Lys633) is an N6-acetyllysine; alternate. A Glycyl lysine isopeptide (Lys-Gly) (interchain with G-Cter in ubiquitin); alternate cross-link involves residue Lys633. Ser640 is subject to Phosphoserine. The residue at position 646 (Lys646) is an N6,N6-dimethyllysine; alternate. Residues Lys646, Lys652, and Lys656 each carry the N6-acetyllysine; alternate modification. Glycyl lysine isopeptide (Lys-Gly) (interchain with G-Cter in ubiquitin); alternate cross-links involve residues Lys646, Lys652, and Lys656. Ser659 carries the post-translational modification Phosphoserine. N6-acetyllysine; alternate occurs at positions 666, 678, and 682. Glycyl lysine isopeptide (Lys-Gly) (interchain with G-Cter in ubiquitin); alternate cross-links involve residues Lys666, Lys678, and Lys682. The residue at position 684 (Arg684) is an Omega-N-methylarginine. Ser687 is subject to Phosphoserine. Lys688 is covalently cross-linked (Glycyl lysine isopeptide (Lys-Gly) (interchain with G-Cter in ubiquitin)). At Ser691 the chain carries Phosphoserine. Lys704 bears the N6-acetyllysine; alternate mark. A Glycyl lysine isopeptide (Lys-Gly) (interchain with G-Cter in ubiquitin); alternate cross-link involves residue Lys704. A Glycyl lysine isopeptide (Lys-Gly) (interchain with G-Cter in ubiquitin) cross-link involves residue Lys710. Residue Lys720 is modified to N6-acetyllysine; alternate. Lys720 is covalently cross-linked (Glycyl lysine isopeptide (Lys-Gly) (interchain with G-Cter in ubiquitin); alternate). Tyr729 is subject to Phosphotyrosine. Phosphoserine is present on residues Ser731 and Ser735. The disordered stretch occupies residues 733 to 752; sequence VVSGDTSPRHLSNVSSTGSI. Residues 736-751 show a composition bias toward polar residues; it reads GDTSPRHLSNVSSTGS. Thr738 carries the post-translational modification Phosphothreonine. Ser739, Ser744, Ser751, and Ser757 each carry phosphoserine. Thr762 is subject to Phosphothreonine.

As to quaternary structure, interacts with MARK1, MARK2, MARK3 and MARK4. Interacts with SQSTM1 when polyubiquitinated. Interacts with PSMC2 through SQSTM1. Interacts with FKBP4. Binds to CSNK1D. Interacts with SGK1. Interacts with EPM2A; the interaction dephosphorylates MAPT at Ser-396. Interacts with PIN1. Interacts with LRRK2. Interacts with LRP1, leading to endocytosis; this interaction is reduced in the presence of LRPAP1/RAP. Post-translationally, polyubiquitinated. Requires functional TRAF6 and may provoke SQSTM1-dependent degradation by the proteasome. Phosphorylation at various serine and threonine residues in S-P or T-P motifs by proline-directed protein kinases (PDPK1, CDK1, CDK5, GSK3, MAPK) (a few sites per protein in interphase, more in mitosis), and at serine residues in K-X-G-S motifs by MAP/microtubule affinity-regulating kinase (MARK1, MARK2, MARK3 or MARK4), causing detachment from microtubules, and their disassembly. Phosphorylation at Ser-597 by BRSK1 and BRSK2 in neurons affects ability to bind microtubules and plays a role in neuron polarization. Phosphorylated by PHK. Dephosphorylation at several serine and threonine residues by the serine/threonine phosphatase PPP5C. Phosphorylation at Ser-214 by SGK1 mediates microtubule depolymerization and neurite formation in hippocampal neurons.

The protein resides in the cytoplasm. It localises to the cytosol. It is found in the cell membrane. The protein localises to the cytoskeleton. Its subcellular location is the cell projection. The protein resides in the axon. It localises to the dendrite. Its function is as follows. Promotes microtubule assembly and stability, and might be involved in the establishment and maintenance of neuronal polarity. The C-terminus binds axonal microtubules while the N-terminus binds neural plasma membrane components, suggesting that tau functions as a linker protein between both. Axonal polarity is predetermined by tau localization (in the neuronal cell) in the domain of the cell body defined by the centrosome. The short isoforms allow plasticity of the cytoskeleton whereas the longer isoforms may preferentially play a role in its stabilization. This chain is Microtubule-associated protein tau (MAPT), found in Pan troglodytes (Chimpanzee).